The sequence spans 212 residues: Peptide methionine sulfoxide reductase MsrA (212 aa).

Residue C52 is part of the active site.

It belongs to the MsrA Met sulfoxide reductase family.

The catalysed reaction is L-methionyl-[protein] + [thioredoxin]-disulfide + H2O = L-methionyl-(S)-S-oxide-[protein] + [thioredoxin]-dithiol. The enzyme catalyses [thioredoxin]-disulfide + L-methionine + H2O = L-methionine (S)-S-oxide + [thioredoxin]-dithiol. In terms of biological role, has an important function as a repair enzyme for proteins that have been inactivated by oxidation. Catalyzes the reversible oxidation-reduction of methionine sulfoxide in proteins to methionine. The chain is Peptide methionine sulfoxide reductase MsrA from Escherichia coli O17:K52:H18 (strain UMN026 / ExPEC).